We begin with the raw amino-acid sequence, 145 residues long: Mediator of RNA polymerase II transcription subunit 21 (145 aa).

Positions 79–112 (EESTAALQAASLRQLEEENQEAAARLEEVVYRGD) form a coiled coil.

It belongs to the Mediator complex subunit 21 family. Component of the Mediator complex.

Its subcellular location is the nucleus. Functionally, component of the Mediator complex, a coactivator involved in the regulated transcription of nearly all RNA polymerase II-dependent genes. Mediator functions as a bridge to convey information from gene-specific regulatory proteins to the basal RNA polymerase II transcription machinery. Mediator is recruited to promoters by direct interactions with regulatory proteins and serves as a scaffold for the assembly of a functional preinitiation complex with RNA polymerase II and the general transcription factors. This is Mediator of RNA polymerase II transcription subunit 21 (med21) from Danio rerio (Zebrafish).